A 454-amino-acid polypeptide reads, in one-letter code: Mitochondrial distribution and morphology protein 10 (454 aa).

It belongs to the MDM10 family. Component of the ER-mitochondria encounter structure (ERMES) or MDM complex, composed of MMM1, MDM10, MDM12 and MDM34. Associates with the mitochondrial outer membrane sorting assembly machinery SAM(core) complex.

The protein resides in the mitochondrion outer membrane. In terms of biological role, component of the ERMES/MDM complex, which serves as a molecular tether to connect the endoplasmic reticulum and mitochondria. Components of this complex are involved in the control of mitochondrial shape and protein biogenesis and may function in phospholipid exchange. MDM10 is involved in the late assembly steps of the general translocase of the mitochondrial outer membrane (TOM complex). Functions in the TOM40-specific route of the assembly of outer membrane beta-barrel proteins, including the association of TOM40 with the receptor TOM22 and small TOM proteins. Can associate with the SAM(core) complex as well as the MDM12-MMM1 complex, both involved in late steps of the major beta-barrel assembly pathway, that is responsible for biogenesis of all outer membrane beta-barrel proteins. May act as a switch that shuttles between both complexes and channels precursor proteins into the TOM40-specific pathway. Plays a role in mitochondrial morphology and in the inheritance of mitochondria. The chain is Mitochondrial distribution and morphology protein 10 from Candida tropicalis (strain ATCC MYA-3404 / T1) (Yeast).